The chain runs to 74 residues: U-actitoxin-Bgr3a (74 aa).

An N-terminal signal peptide occupies residues 1-21; the sequence is MSAQRFLFLLVVTSLIAASLA. Residues 22-29 constitute a propeptide that is removed on maturation; that stretch reads APKDVQLT. 3 disulfides stabilise this stretch: Cys-35–Cys-68, Cys-37–Cys-61, and Cys-51–Cys-69.

Belongs to the sea anemone type 3 (BDS) potassium channel toxin family.

Its subcellular location is the secreted. It localises to the nematocyst. Functionally, potently and selectively inhibits voltage-gated potassium channels Kv11/KCNH/ERG. Acts as a gating-modifier toxin that shifts the voltage-dependence of ERG activation in the positive direction and suppresses its current amplitudes elicited by strong depolarizing pulses that maximally activate the channels. This Bunodosoma granuliferum (Red warty sea anemone) protein is U-actitoxin-Bgr3a.